Consider the following 92-residue polypeptide: YcgL domain-containing protein Shewmr7_2249 (92 aa).

Residues 1–85 (MLCAVYKSSR…PQVNLLAEHR (85 aa)) enclose the YcgL domain.

The sequence is that of YcgL domain-containing protein Shewmr7_2249 from Shewanella sp. (strain MR-7).